An 886-amino-acid chain; its full sequence is Phycobiliprotein ApcE (886 aa).

C187 contributes to the (2R,3E)-phycocyanobilin binding site. PBS-linker domains follow at residues 244-424 (DLQG…FRKV), 496-678 (QVRP…ISSK), and 695-876 (NDIQ…SVVV).

It belongs to the phycobilisome linker protein family. In terms of processing, contains one covalently linked bilin chromophore. This protein autochromophorylates (Potential).

Its subcellular location is the plastid. It localises to the chloroplast thylakoid membrane. In terms of biological role, this protein is postulated to act both as terminal energy acceptor and as a linker polypeptide that stabilizes the phycobilisome architecture. May have intrinsic bilin lyase activity. This chain is Phycobiliprotein ApcE (apcE), found in Porphyra purpurea (Red seaweed).